The sequence spans 201 residues: Protein TV1384 (201 aa).

In terms of domain architecture, AMMECR1 spans 11 to 200 (DIGAKAVMLA…EIEPNGKVEQ (190 aa)).

The chain is Protein TV1384 from Thermoplasma volcanium (strain ATCC 51530 / DSM 4299 / JCM 9571 / NBRC 15438 / GSS1).